Consider the following 536-residue polypeptide: SNW domain-containing protein 1 (536 aa).

The disordered stretch occupies residues Met-1 to Tyr-46. Residue Ala-2 is modified to N-acetylalanine. The residue at position 14 (Ser-14) is a Phosphoserine. Residue Lys-23 forms a Glycyl lysine isopeptide (Lys-Gly) (interchain with G-Cter in SUMO2) linkage. Residues Gly-59–Lys-79 are interaction with PPIL1. Residues Lys-81, Lys-97, Lys-115, Lys-122, Lys-141, Lys-158, and Lys-170 each participate in a glycyl lysine isopeptide (Lys-Gly) (interchain with G-Cter in SUMO2) cross-link. The SNW stretch occupies residues Ala-174–Lys-339. Ser-182 and Ser-190 each carry phosphoserine. A Glycyl lysine isopeptide (Lys-Gly) (interchain with G-Cter in SUMO2) cross-link involves residue Lys-193. The tract at residues Pro-209 to Pro-233 is disordered. Ser-224, Ser-232, and Ser-234 each carry phosphoserine. Residues Lys-240, Lys-258, Lys-286, Lys-339, Lys-344, Lys-416, Lys-441, and Lys-452 each participate in a glycyl lysine isopeptide (Lys-Gly) (interchain with G-Cter in SUMO2) cross-link. The interval Lys-311–Arg-386 is disordered. Composition is skewed to basic and acidic residues over residues Phe-472–Glu-489 and Lys-503–Gly-530. The segment at Phe-472–Glu-536 is disordered. Residues Ser-479 and Ser-481 each carry the phosphoserine modification. A Glycyl lysine isopeptide (Lys-Gly) (interchain with G-Cter in SUMO2) cross-link involves residue Lys-509.

It belongs to the SNW family. In terms of assembly, identified in the spliceosome C complex. Associates with U4/U6-U5 tri-small nuclear ribonucleoproteins (U4/U6-U5 tri-snRNPs). Component of the minor spliceosome, which splices U12-type introns. Interacts with SKI, SMAD2,SMAD3, RBPJ, RB1, PABPN1, MAGEA1, SIRT1, FOXN3, U2AF2, PPIL1, DAXX and ATP1B4. Interacts with VDR and RXRA; preferentially associates with VDR:RXRA heterodimers. Interacts with NCOR2. Interacts with MAML1. Interacts with NOTCH1 NICD; the interaction involves multimerized NOTCH1 NICD. Forms a complex with NOTCH1 NICD and MAML1; the association is dissociated by RBPJ. Associates with positive transcription elongation factor b (P-TEFb). Component of the SNARP complex which consists at least of SNIP1, SNW1, THRAP3, BCLAF1 and PNN.

The protein resides in the nucleus. Its function is as follows. Involved in pre-mRNA splicing as component of the spliceosome. As a component of the minor spliceosome, involved in the splicing of U12-type introns in pre-mRNAs. Required in the specific splicing of CDKN1A pre-mRNA; the function probably involves the recruitment of U2AF2 to the mRNA. May recruit PPIL1 to the spliceosome. May be involved in cyclin-D1/CCND1 mRNA stability through the SNARP complex which associates with both the 3'end of the CCND1 gene and its mRNA. Involved in transcriptional regulation. Modulates TGF-beta-mediated transcription via association with SMAD proteins, MYOD1-mediated transcription via association with PABPN1, RB1-mediated transcriptional repression, and retinoid-X receptor (RXR)- and vitamin D receptor (VDR)-dependent gene transcription in a cell line-specific manner probably involving coactivators NCOA1 and GRIP1. Is involved in NOTCH1-mediated transcriptional activation. Binds to multimerized forms of Notch intracellular domain (NICD) and is proposed to recruit transcriptional coactivators such as MAML1 to form an intermediate preactivation complex which associates with DNA-bound CBF-1/RBPJ to form a transcriptional activation complex by releasing SNW1 and redundant NOTCH1 NICD. In Bos taurus (Bovine), this protein is SNW domain-containing protein 1 (SNW1).